The following is a 165-amino-acid chain: Lipoprotein signal peptidase (165 aa).

Helical transmembrane passes span 7-27 (YFSSSSSMLPWLGIAAVLVLL), 46-66 (AVTSFFNLVLVYNKGAAFSFL), 72-92 (WQRYFFTIMGIGAAIFIIYLL), and 100-120 (LFCWALALILGGAIGNVIDRV). Catalysis depends on residues D127 and D145. A helical membrane pass occupies residues 136-156 (WHWPAFNIADSAICIGAVLFI).

Belongs to the peptidase A8 family.

The protein resides in the cell inner membrane. The enzyme catalyses Release of signal peptides from bacterial membrane prolipoproteins. Hydrolyzes -Xaa-Yaa-Zaa-|-(S,diacylglyceryl)Cys-, in which Xaa is hydrophobic (preferably Leu), and Yaa (Ala or Ser) and Zaa (Gly or Ala) have small, neutral side chains.. Its pathway is protein modification; lipoprotein biosynthesis (signal peptide cleavage). In terms of biological role, this protein specifically catalyzes the removal of signal peptides from prolipoproteins. The sequence is that of Lipoprotein signal peptidase from Janthinobacterium sp. (strain Marseille) (Minibacterium massiliensis).